Reading from the N-terminus, the 198-residue chain is Chitin synthase 2 (198 aa).

Belongs to the chitin synthase family. Class III subfamily.

Its subcellular location is the cell membrane. It carries out the reaction [(1-&gt;4)-N-acetyl-beta-D-glucosaminyl](n) + UDP-N-acetyl-alpha-D-glucosamine = [(1-&gt;4)-N-acetyl-beta-D-glucosaminyl](n+1) + UDP + H(+). Polymerizes chitin, a structural polymer of the cell wall and septum, by transferring the sugar moiety of UDP-GlcNAc to the non-reducing end of the growing chitin polymer. The sequence is that of Chitin synthase 2 (CHS2) from Rhinocladiella atrovirens.